The sequence spans 274 residues: uncharacterized protein (274 aa).

This sequence belongs to the PhoU family.

This is an uncharacterized protein from Deinococcus radiodurans (strain ATCC 13939 / DSM 20539 / JCM 16871 / CCUG 27074 / LMG 4051 / NBRC 15346 / NCIMB 9279 / VKM B-1422 / R1).